Reading from the N-terminus, the 276-residue chain is Formamidopyrimidine-DNA glycosylase (276 aa).

Pro2 (schiff-base intermediate with DNA) is an active-site residue. The active-site Proton donor is the Glu3. Lys58 acts as the Proton donor; for beta-elimination activity in catalysis. His92, Arg111, and Lys154 together coordinate DNA. The FPG-type zinc finger occupies 239-273; that stretch reads QVYGHAGEECSSCGTILEKIKVNGRGTTFCPHCQV. The active-site Proton donor; for delta-elimination activity is the Arg263.

This sequence belongs to the FPG family. As to quaternary structure, monomer. Zn(2+) is required as a cofactor.

The catalysed reaction is Hydrolysis of DNA containing ring-opened 7-methylguanine residues, releasing 2,6-diamino-4-hydroxy-5-(N-methyl)formamidopyrimidine.. It carries out the reaction 2'-deoxyribonucleotide-(2'-deoxyribose 5'-phosphate)-2'-deoxyribonucleotide-DNA = a 3'-end 2'-deoxyribonucleotide-(2,3-dehydro-2,3-deoxyribose 5'-phosphate)-DNA + a 5'-end 5'-phospho-2'-deoxyribonucleoside-DNA + H(+). Involved in base excision repair of DNA damaged by oxidation or by mutagenic agents. Acts as a DNA glycosylase that recognizes and removes damaged bases. Has a preference for oxidized purines, such as 7,8-dihydro-8-oxoguanine (8-oxoG). Has AP (apurinic/apyrimidinic) lyase activity and introduces nicks in the DNA strand. Cleaves the DNA backbone by beta-delta elimination to generate a single-strand break at the site of the removed base with both 3'- and 5'-phosphates. This is Formamidopyrimidine-DNA glycosylase from Lactobacillus gasseri (strain ATCC 33323 / DSM 20243 / BCRC 14619 / CIP 102991 / JCM 1131 / KCTC 3163 / NCIMB 11718 / NCTC 13722 / AM63).